The following is a 160-amino-acid chain: Putative flagellin YvzB (160 aa).

The protein belongs to the bacterial flagellin family. In terms of assembly, interacts with FliW.

It localises to the bacterial flagellum. The protein is Putative flagellin YvzB (yvzB) of Bacillus subtilis (strain 168).